A 323-amino-acid polypeptide reads, in one-letter code: Non-structural protein 9 (323 aa).

The interval 1–142 (MFTSSAAKTG…GGSRPSQERG (142 aa)) is disordered. The segment covering 33–49 (IDGSISSGPISTGPDSD) has biased composition (low complexity). The span at 99–115 (PNHTDIGTSLGQVTTKG) shows a compositional bias: polar residues.

The protein localises to the host cytoplasm. Its function is as follows. Constituent of viral factories. This Rice gall dwarf virus (RGDV) protein is Non-structural protein 9.